We begin with the raw amino-acid sequence, 1399 residues long: Alpha-glucan water dikinase 1, chloroplastic (1399 aa).

Residues methionine 1–alanine 75 constitute a chloroplast transit peptide. Residue valine 76 is modified to N-acetylvaline. A disordered region spans residues leucine 265–isoleucine 306. A compositionally biased stretch (polar residues) spans asparagine 272–serine 283. Basic and acidic residues predominate over residues glycine 284–isoleucine 306. Histidine 1004 (tele-phosphohistidine intermediate) is an active-site residue.

It belongs to the PEP-utilizing enzyme family. Homodimer. Mg(2+) is required as a cofactor.

The protein localises to the plastid. Its subcellular location is the chloroplast. The catalysed reaction is [(1-&gt;4)-alpha-D-glucosyl](n) + n ATP + n H2O = [(1-&gt;4)-6-phospho-alpha-D-glucosyl](n) + n AMP + n phosphate + 2n H(+). Mediates the incorporation of phosphate into starch-like alpha-glucan, mostly at the C-6 position of glucose units. Acts as an overall regulator of starch mobilization. Required for starch degradation, suggesting that the phosphate content of starch regulates its degradability. The chain is Alpha-glucan water dikinase 1, chloroplastic from Arabidopsis thaliana (Mouse-ear cress).